The following is a 417-amino-acid chain: Serine hydroxymethyltransferase (417 aa).

(6S)-5,6,7,8-tetrahydrofolate-binding positions include leucine 112 and 116–118; that span reads GHL. Lysine 221 is subject to N6-(pyridoxal phosphate)lysine. Glutamate 247 contributes to the (6S)-5,6,7,8-tetrahydrofolate binding site.

Belongs to the SHMT family. Homodimer. The cofactor is pyridoxal 5'-phosphate.

It is found in the cytoplasm. The catalysed reaction is (6R)-5,10-methylene-5,6,7,8-tetrahydrofolate + glycine + H2O = (6S)-5,6,7,8-tetrahydrofolate + L-serine. The protein operates within one-carbon metabolism; tetrahydrofolate interconversion. Its pathway is amino-acid biosynthesis; glycine biosynthesis; glycine from L-serine: step 1/1. Its function is as follows. Catalyzes the reversible interconversion of serine and glycine with tetrahydrofolate (THF) serving as the one-carbon carrier. This reaction serves as the major source of one-carbon groups required for the biosynthesis of purines, thymidylate, methionine, and other important biomolecules. Also exhibits THF-independent aldolase activity toward beta-hydroxyamino acids, producing glycine and aldehydes, via a retro-aldol mechanism. This Borrelia garinii subsp. bavariensis (strain ATCC BAA-2496 / DSM 23469 / PBi) (Borreliella bavariensis) protein is Serine hydroxymethyltransferase.